A 217-amino-acid polypeptide reads, in one-letter code: MFFKMLKEDIDTVFDQDPAARSYIEVVLTYSGLHAIWAHRIAHAFYKRKLYFLARIISQVSRFFTGVEIHPAATIGRRFFIDHGMGVVIGETCEIGDNVTVFQGVTLGGTGKEKGKRHPTILDDALIATGAKVLGSITVGKGAKIGAGSVVLKDVPDHSTVVGIPGRVVVQNGKKINRDLNHQDLPDPISDRFKELEREMEKLKGELASLSRKEEQS.

It belongs to the transferase hexapeptide repeat family.

It localises to the cytoplasm. It carries out the reaction L-serine + acetyl-CoA = O-acetyl-L-serine + CoA. Its pathway is amino-acid biosynthesis; L-cysteine biosynthesis; L-cysteine from L-serine: step 1/2. With respect to regulation, inhibited by cysteine. Functionally, catalyzes the acetylation of serine by acetyl-CoA to produce O-acetylserine (OAS). The chain is Serine acetyltransferase from Bacillus pumilus (strain SAFR-032).